A 315-amino-acid polypeptide reads, in one-letter code: Ankyrin repeat domain-containing protein EMB506, chloroplastic (315 aa).

The transit peptide at 1–39 directs the protein to the chloroplast; that stretch reads MVSSVLSIPPQTCLLPRLPISDSVNCKSKIVYCLSTSVR. Over residues 44-65 the composition is skewed to polar residues; sequence KRQSTARTRSFTETNRRTPSVQ. Positions 44–106 are disordered; it reads KRQSTARTRS…DNESDWEDDS (63 aa). The span at 72 to 104 shows a compositional bias: acidic residues; the sequence is EDPDDGSDSENEYEGEEEDGIGNDLDNESDWED. ANK repeat units follow at residues 151-180, 184-213, 217-246, 250-279, and 283-307; these read KSWKPLQTLALSMQIQLMDNLIENGLDIDD, DNQTALHKAIIGKKEAVISHLLRKGANPHL, DGAAPIHYAVQVGALQTVKLLFKYNVDVNV, EGWTPLHIAVQSRNRDITKILLTNGADKTR, and DGKLALDLALCFGRDFKSYDLVKLL.

As to quaternary structure, interacts with AKR. No homodimerization observed. As to expression, expressed in roots, inflorescence stems, flowers, siliques, dry seeds and mature cauline leaves.

The protein localises to the plastid. Its subcellular location is the chloroplast. Its function is as follows. Involved in the initial differentiation of the proplastid during the embryo development. Also required for correct cotyledon, true leaf and cauline leaf margin development. This Arabidopsis thaliana (Mouse-ear cress) protein is Ankyrin repeat domain-containing protein EMB506, chloroplastic (EMB506).